The chain runs to 318 residues: Small ribosomal subunit protein mS26 (318 aa).

The interval 295 to 318 (IDSKLNPTSNGAGNNGNNNNTTNL) is disordered. Residues 300–318 (NPTSNGAGNNGNNNNTTNL) are compositionally biased toward low complexity.

Belongs to the mitochondrion-specific ribosomal protein mS26 family. In terms of assembly, component of the mitochondrial small ribosomal subunit (mt-SSU). Mature yeast 74S mitochondrial ribosomes consist of a small (37S) and a large (54S) subunit. The 37S small subunit contains a 15S ribosomal RNA (15S mt-rRNA) and 34 different proteins. The 54S large subunit contains a 21S rRNA (21S mt-rRNA) and 46 different proteins.

The protein localises to the mitochondrion. Component of the mitochondrial ribosome (mitoribosome), a dedicated translation machinery responsible for the synthesis of mitochondrial genome-encoded proteins, including at least some of the essential transmembrane subunits of the mitochondrial respiratory chain. The mitoribosomes are attached to the mitochondrial inner membrane and translation products are cotranslationally integrated into the membrane. The polypeptide is Small ribosomal subunit protein mS26 (PET123) (Saccharomyces cerevisiae (strain ATCC 204508 / S288c) (Baker's yeast)).